The following is an 877-amino-acid chain: Alanine--tRNA ligase (877 aa).

Residues histidine 565, histidine 569, cysteine 667, and histidine 671 each coordinate Zn(2+).

The protein belongs to the class-II aminoacyl-tRNA synthetase family. The cofactor is Zn(2+).

The protein localises to the cytoplasm. It carries out the reaction tRNA(Ala) + L-alanine + ATP = L-alanyl-tRNA(Ala) + AMP + diphosphate. Functionally, catalyzes the attachment of alanine to tRNA(Ala) in a two-step reaction: alanine is first activated by ATP to form Ala-AMP and then transferred to the acceptor end of tRNA(Ala). Also edits incorrectly charged Ser-tRNA(Ala) and Gly-tRNA(Ala) via its editing domain. In Acidithiobacillus ferridurans, this protein is Alanine--tRNA ligase.